Here is a 299-residue protein sequence, read N- to C-terminus: ATP phosphoribosyltransferase (299 aa).

It belongs to the ATP phosphoribosyltransferase family. Long subfamily. Equilibrium between an active dimeric form, an inactive hexameric form and higher aggregates. Interconversion between the various forms is largely reversible and is influenced by the natural substrates and inhibitors of the enzyme. Mg(2+) serves as cofactor.

Its subcellular location is the cytoplasm. It carries out the reaction 1-(5-phospho-beta-D-ribosyl)-ATP + diphosphate = 5-phospho-alpha-D-ribose 1-diphosphate + ATP. Its pathway is amino-acid biosynthesis; L-histidine biosynthesis; L-histidine from 5-phospho-alpha-D-ribose 1-diphosphate: step 1/9. With respect to regulation, feedback inhibited by histidine. Catalyzes the condensation of ATP and 5-phosphoribose 1-diphosphate to form N'-(5'-phosphoribosyl)-ATP (PR-ATP). Has a crucial role in the pathway because the rate of histidine biosynthesis seems to be controlled primarily by regulation of HisG enzymatic activity. The polypeptide is ATP phosphoribosyltransferase (Buchnera aphidicola subsp. Melaphis rhois).